The following is a 256-amino-acid chain: V-type proton ATPase subunit D (256 aa).

Positions 211–230 are enriched in basic and acidic residues; that stretch reads QNETAKLDAEMKLKRDRAEQ. Residues 211–256 form a disordered region; the sequence is QNETAKLDAEMKLKRDRAEQDASEVAADEEPQGETLVADQEDDVIF.

Belongs to the V-ATPase D subunit family. V-ATPase is a heteromultimeric enzyme composed of a peripheral catalytic V1 complex (components A to H) attached to an integral membrane V0 proton pore complex (components: a, c, c', c'', d, e, f and VOA1). Interacts with RAV1 and RAV2 components of the RAVE complex, which are essential for the stability and assembly of V-ATPase.

The protein localises to the vacuole membrane. Functionally, subunit of the V1 complex of vacuolar(H+)-ATPase (V-ATPase), a multisubunit enzyme composed of a peripheral complex (V1) that hydrolyzes ATP and a membrane integral complex (V0) that translocates protons. V-ATPase is responsible for acidifying and maintaining the pH of intracellular compartments. This chain is V-type proton ATPase subunit D, found in Saccharomyces cerevisiae (strain ATCC 204508 / S288c) (Baker's yeast).